The following is a 358-amino-acid chain: UDP-N-acetylglucosamine--N-acetylmuramyl-(pentapeptide) pyrophosphoryl-undecaprenol N-acetylglucosamine transferase (358 aa).

UDP-N-acetyl-alpha-D-glucosamine contacts are provided by residues 11–13, Asn-120, Arg-161, Ser-188, and Gln-282; that span reads TGG.

Belongs to the glycosyltransferase 28 family. MurG subfamily.

It localises to the cell inner membrane. The catalysed reaction is di-trans,octa-cis-undecaprenyl diphospho-N-acetyl-alpha-D-muramoyl-L-alanyl-D-glutamyl-meso-2,6-diaminopimeloyl-D-alanyl-D-alanine + UDP-N-acetyl-alpha-D-glucosamine = di-trans,octa-cis-undecaprenyl diphospho-[N-acetyl-alpha-D-glucosaminyl-(1-&gt;4)]-N-acetyl-alpha-D-muramoyl-L-alanyl-D-glutamyl-meso-2,6-diaminopimeloyl-D-alanyl-D-alanine + UDP + H(+). It participates in cell wall biogenesis; peptidoglycan biosynthesis. In terms of biological role, cell wall formation. Catalyzes the transfer of a GlcNAc subunit on undecaprenyl-pyrophosphoryl-MurNAc-pentapeptide (lipid intermediate I) to form undecaprenyl-pyrophosphoryl-MurNAc-(pentapeptide)GlcNAc (lipid intermediate II). This is UDP-N-acetylglucosamine--N-acetylmuramyl-(pentapeptide) pyrophosphoryl-undecaprenol N-acetylglucosamine transferase from Synechococcus sp. (strain WH7803).